The following is a 231-amino-acid chain: 2-C-methyl-D-erythritol 4-phosphate cytidylyltransferase (231 aa).

The protein belongs to the IspD/TarI cytidylyltransferase family. IspD subfamily.

It catalyses the reaction 2-C-methyl-D-erythritol 4-phosphate + CTP + H(+) = 4-CDP-2-C-methyl-D-erythritol + diphosphate. It participates in isoprenoid biosynthesis; isopentenyl diphosphate biosynthesis via DXP pathway; isopentenyl diphosphate from 1-deoxy-D-xylulose 5-phosphate: step 2/6. Functionally, catalyzes the formation of 4-diphosphocytidyl-2-C-methyl-D-erythritol from CTP and 2-C-methyl-D-erythritol 4-phosphate (MEP). The sequence is that of 2-C-methyl-D-erythritol 4-phosphate cytidylyltransferase from Pseudoalteromonas atlantica (strain T6c / ATCC BAA-1087).